Here is a 99-residue protein sequence, read N- to C-terminus: UPF0751 protein BCAH820_B0138 (99 aa).

This sequence belongs to the UPF0751 family.

This is UPF0751 protein BCAH820_B0138 from Bacillus cereus (strain AH820).